Reading from the N-terminus, the 367-residue chain is Ribosomal RNA large subunit methyltransferase M (367 aa).

S-adenosyl-L-methionine is bound by residues S189, 222–225 (CPGG), D241, D261, and D278. The Proton acceptor role is filled by K307.

It belongs to the class I-like SAM-binding methyltransferase superfamily. RNA methyltransferase RlmE family. RlmM subfamily. In terms of assembly, monomer.

It is found in the cytoplasm. The enzyme catalyses cytidine(2498) in 23S rRNA + S-adenosyl-L-methionine = 2'-O-methylcytidine(2498) in 23S rRNA + S-adenosyl-L-homocysteine + H(+). In terms of biological role, catalyzes the 2'-O-methylation at nucleotide C2498 in 23S rRNA. This Shewanella denitrificans (strain OS217 / ATCC BAA-1090 / DSM 15013) protein is Ribosomal RNA large subunit methyltransferase M.